A 107-amino-acid chain; its full sequence is MGRKKGLPEFEESAPDGFDPENPYKDPVAMVEMREHIVREKWIHIEKAKILREKVKWCYRVEGVNHYQKCRHLVQQYLDATRGVGWGKDHRPISLHGPKPVAVEEAE.

Residues 1–23 (MGRKKGLPEFEESAPDGFDPENP) form a disordered region.

It belongs to the complex I NDUFB10 subunit family. In terms of assembly, complex I is composed of at least 49 different subunits.

Its subcellular location is the mitochondrion inner membrane. Functionally, accessory subunit of the mitochondrial membrane respiratory chain NADH dehydrogenase (Complex I), that is believed not to be involved in catalysis. Complex I functions in the transfer of electrons from NADH to the respiratory chain. The immediate electron acceptor for the enzyme is believed to be ubiquinone. This chain is NADH dehydrogenase [ubiquinone] 1 beta subcomplex subunit 10-A, found in Arabidopsis thaliana (Mouse-ear cress).